A 193-amino-acid chain; its full sequence is MKQLEDKIREEGRALSDQVLKVDAFLNHQVDPVLMQAIGKEFAERFKDAQIDRIVTLESSGIAPAMMTALEMDIPFVFARKRKSLTLQDDLVEADVYSFTKQETNRISLSRRFVLPGERVLVIDDFLANGEAALGLTQLVEAAGAEVSGVGIVIEKSFQLGRDKLIERGYRVESLARVAKLEKDHISFVEVVR.

The xanthine site is built by Leu-20 and Asn-27. Position 128–132 (Ala-128–Ala-132) interacts with 5-phospho-alpha-D-ribose 1-diphosphate. Lys-156 provides a ligand contact to xanthine.

This sequence belongs to the purine/pyrimidine phosphoribosyltransferase family. Xpt subfamily. Homodimer.

Its subcellular location is the cytoplasm. The catalysed reaction is XMP + diphosphate = xanthine + 5-phospho-alpha-D-ribose 1-diphosphate. It functions in the pathway purine metabolism; XMP biosynthesis via salvage pathway; XMP from xanthine: step 1/1. Functionally, converts the preformed base xanthine, a product of nucleic acid breakdown, to xanthosine 5'-monophosphate (XMP), so it can be reused for RNA or DNA synthesis. In Exiguobacterium sp. (strain ATCC BAA-1283 / AT1b), this protein is Xanthine phosphoribosyltransferase.